A 541-amino-acid chain; its full sequence is CRISPR-associated exonuclease Cas4/endonuclease Cas1 fusion (541 aa).

The tract at residues 1–179 is CRISPR-associated exonuclease Cas4; sequence MGIHSLLYCE…NCSLAPVCLP (179 aa). Cys9 contacts [4Fe-4S] cluster. 2 residues coordinate Mn(2+): Asp65 and Glu78. Cys168, Cys171, and Cys177 together coordinate [4Fe-4S] cluster. The CRISPR-associated endonuclease Cas1 stretch occupies residues 204 to 541; the sequence is TLHVFGHDSR…ANIFAQARLR (338 aa). The Mn(2+) site is built by Glu365, His433, and Glu448.

It in the N-terminal section; belongs to the CRISPR-associated exonuclease Cas4 family. This sequence in the C-terminal section; belongs to the CRISPR-associated endonuclease Cas1 family. Homodimer, forms a heterotetramer with a Cas2 homodimer. [4Fe-4S] cluster is required as a cofactor. It depends on Mg(2+) as a cofactor. Mn(2+) serves as cofactor.

It catalyses the reaction exonucleolytic cleavage in the 5'- to 3'-direction to yield nucleoside 3'-phosphates.. CRISPR (clustered regularly interspaced short palindromic repeat), is an adaptive immune system that provides protection against mobile genetic elements (viruses, transposable elements and conjugative plasmids). CRISPR clusters contain spacers, sequences complementary to antecedent mobile elements, and target invading nucleic acids. CRISPR clusters are transcribed and processed into CRISPR RNA (crRNA). The Cas4 region acts as a ssDNA exonuclease, while the Cas1 region acts as a dsDNA endonuclease. Involved in the integration of spacer DNA into the CRISPR cassette. This chain is CRISPR-associated exonuclease Cas4/endonuclease Cas1 fusion (cas4-cas1), found in Leptospira interrogans serogroup Icterohaemorrhagiae serovar Lai (strain 56601).